A 277-amino-acid chain; its full sequence is Methylglyoxal reductase DkgA (277 aa).

Tyr-51 (proton donor) is an active-site residue. Residue His-107 coordinates substrate. 187–241 is a binding site for NADP(+); that stretch reads SPLAQGGKGVFDQEIIRKLAQQYNKTPAQIVIRWHLDSGLIVIPKSVTPARIREN.

This sequence belongs to the aldo/keto reductase family. As to quaternary structure, monomer.

It localises to the cytoplasm. It catalyses the reaction hydroxyacetone + NADP(+) = methylglyoxal + NADPH + H(+). Its function is as follows. Aldo-keto reductase that significantly contributes to cellular methylglyoxal detoxification by catalyzing the NADPH-dependent conversion of methylglyoxal to acetol. The chain is Methylglyoxal reductase DkgA from Yersinia pestis.